The chain runs to 75 residues: Bacteriocin lactacin-F subunit LafA (75 aa).

The propeptide occupies 1–18 (MKQFNYLSHKDLAVVVGG).

It belongs to the bacteriocin class IIB family. This bacteriocin depends upon the complementation of two peptides for activity: LafA and LafX. Associated with a 180 kDa bacteriocin complex.

In terms of biological role, heat stable bacteriocin active against Enterococcus faecalis and other Lactobacilli. This Lactobacillus johnsonii (strain CNCM I-12250 / La1 / NCC 533) protein is Bacteriocin lactacin-F subunit LafA (lafA).